Here is a 330-residue protein sequence, read N- to C-terminus: Putative glycosyltransferase HI_0258 (330 aa).

Basic and acidic residues predominate over residues 1-31; sequence MTDRQTDRQTDRQTDRQTDRQTDRQTDRQTD. Positions 1 to 32 are disordered; it reads MTDRQTDRQTDRQTDRQTDRQTDRQTDRQTDG. UDP is bound by residues 44–49 and 140–141; these read SSDHYY and DV. Residues D140, D142, and H270 each coordinate Mn(2+). 270-276 is a binding site for UDP; that stretch reads HYCGPNK.

This sequence belongs to the glycosyltransferase 8 family.

This is Putative glycosyltransferase HI_0258 from Haemophilus influenzae (strain ATCC 51907 / DSM 11121 / KW20 / Rd).